A 435-amino-acid polypeptide reads, in one-letter code: Methionine aminopeptidase 2-2 (435 aa).

A disordered region spans residues 1–92 (MAAQTTEKLQ…VPVSNLFPNN (92 aa)). Over residues 24–33 (DAPAAGQAEA) the composition is skewed to low complexity. Over residues 34 to 45 (GEAEEDSDDEKD) the composition is skewed to acidic residues. The segment covering 59–73 (AKKKKRKSKKKKKGG) has biased composition (basic residues). Position 197 (His197) interacts with substrate. A divalent metal cation is bound by residues Asp217, Asp228, and His297. His305 contacts substrate. Positions 330 and 425 each coordinate a divalent metal cation.

This sequence belongs to the peptidase M24A family. Methionine aminopeptidase eukaryotic type 2 subfamily. The cofactor is Co(2+). It depends on Zn(2+) as a cofactor. Mn(2+) is required as a cofactor. Requires Fe(2+) as cofactor.

It is found in the cytoplasm. The enzyme catalyses Release of N-terminal amino acids, preferentially methionine, from peptides and arylamides.. In terms of biological role, cotranslationally removes the N-terminal methionine from nascent proteins. The N-terminal methionine is often cleaved when the second residue in the primary sequence is small and uncharged (Met-Ala-, Cys, Gly, Pro, Ser, Thr, or Val). This chain is Methionine aminopeptidase 2-2, found in Aspergillus clavatus (strain ATCC 1007 / CBS 513.65 / DSM 816 / NCTC 3887 / NRRL 1 / QM 1276 / 107).